A 309-amino-acid chain; its full sequence is Olfactory receptor 2AP1 (309 aa).

At 1–23 (MKNKTVLTEFILLGLTDVPELQV) the chain is on the extracellular side. N-linked (GlcNAc...) asparagine glycosylation occurs at Asn3. A helical transmembrane segment spans residues 24–47 (AVFTFLFLAYLLSILGNLTILILT). Residues 48–55 (LLDSHLQT) lie on the Cytoplasmic side of the membrane. A helical transmembrane segment spans residues 56–77 (PMYFFLRNFSFLEISFTNIFIP). Topologically, residues 78-98 (RVLISITTGNKSISFAGCFTQ) are extracellular. A glycan (N-linked (GlcNAc...) asparagine) is linked at Asn87. The cysteines at positions 95 and 187 are disulfide-linked. A helical membrane pass occupies residues 99–118 (YFFAMFLGATEFYLLAAMSY). Residues 119–137 (DRYVAICKPLHYTTIMSSR) are Cytoplasmic-facing. Residues 138 to 156 (ICIQLIFCSWLGGLMAIIP) form a helical membrane-spanning segment. The Extracellular segment spans residues 157 to 193 (TITLMSQQDFCASNRLNHYFCDYEPLLELSCSDTSLI). The chain crosses the membrane as a helical span at residues 194–217 (EKVVFLVASVTLVVTLVLVILSYA). Residues 218-234 (FIIKTILKLPSAQQRTK) are Cytoplasmic-facing. Residues 235 to 257 (AFSTCSSHMIVISLSYGSCMFMY) form a helical membrane-spanning segment. The Extracellular segment spans residues 258-270 (INPSAKEGDTFNK). The helical transmembrane segment at 271-290 (GVALLITSVAPLLNPFIYTL) threads the bilayer. At 291–309 (RNQQVKQPFKDMVKKLLNL) the chain is on the cytoplasmic side.

Belongs to the G-protein coupled receptor 1 family.

The protein resides in the cell membrane. In terms of biological role, odorant receptor. The sequence is that of Olfactory receptor 2AP1 (OR2AP1) from Homo sapiens (Human).